Reading from the N-terminus, the 293-residue chain is 1D-myo-inositol 2-acetamido-2-deoxy-alpha-D-glucopyranoside deacetylase 2 (293 aa).

Zn(2+)-binding residues include histidine 6, aspartate 9, and histidine 142.

It belongs to the MshB deacetylase family. Zn(2+) is required as a cofactor.

It catalyses the reaction 1D-myo-inositol 2-acetamido-2-deoxy-alpha-D-glucopyranoside + H2O = 1D-myo-inositol 2-amino-2-deoxy-alpha-D-glucopyranoside + acetate. Catalyzes the deacetylation of 1D-myo-inositol 2-acetamido-2-deoxy-alpha-D-glucopyranoside (GlcNAc-Ins) in the mycothiol biosynthesis pathway. This Frankia alni (strain DSM 45986 / CECT 9034 / ACN14a) protein is 1D-myo-inositol 2-acetamido-2-deoxy-alpha-D-glucopyranoside deacetylase 2.